Here is a 67-residue protein sequence, read N- to C-terminus: Ubiquinol-cytochrome c reductase complex assembly factor 6 (67 aa).

Over 1–8 (MPGGVPWS) the chain is Mitochondrial matrix. Residues 9-25 (AYLKMLSSSLLAMCAGA) traverse the membrane as a helical; Signal-anchor for type II membrane protein segment. The Mitochondrial intermembrane portion of the chain corresponds to 26 to 67 (QVVHWYYRPDLTIPEIPPKPGELKTELLGLKERRHEPHVSQQ).

The protein belongs to the UQCC6 family. In terms of assembly, interacts with UQCRC1. Interacts with UQCRQ. Interacts with UQCC5. Forms a complex, named COMB/coordinator of mitochondrial CYTB biogenesis, composed of UQCC1, UQCC2, UQCC4, UQCC5 and UQCC6; stabilizes nascent cytochrome b/MT-CYB and promotes its membrane insertion. Forms a complex, named COMA, composed of UQCC1, UQCC2 and UQCC4; activates MT-CYB translation. Forms a complex, named COMC, composed of UQCC1, UQCC2; UQCC3 and UQCC4; mediates MT-CYB hemylation and association with the first nuclear-encoded complex III subunit UQCRQ. Interacts with MT-CYB. As to expression, highly expressed in brown adipose, cardiac and skeletal muscle (at protein level).

Its subcellular location is the mitochondrion inner membrane. Functionally, required for the assembly and stability of the mitochondrial ubiquinol-cytochrome c reductase complex (complex III or cytochrome b-c1 complex), a multisubunit transmembrane complex that is part of the mitochondrial electron transport chain (ETC) which drives oxidative phosphorylation. Mediates early complex III biogenesis. Participates in regulating the levels of electron transport chain proteins, and therefore energy supply, in response to changes in energy demand. Also required for cytochrome c oxidase complex (complex IV) assembly. In Mus musculus (Mouse), this protein is Ubiquinol-cytochrome c reductase complex assembly factor 6.